The chain runs to 81 residues: Large ribosomal subunit protein bL31B (81 aa).

Belongs to the bacterial ribosomal protein bL31 family. Type B subfamily. As to quaternary structure, part of the 50S ribosomal subunit.

The chain is Large ribosomal subunit protein bL31B from Lactobacillus helveticus (strain DPC 4571).